The chain runs to 127 residues: RxLR effector protein SFI3 (127 aa).

A signal peptide spans 1–20 (MRFLLVAVVAMMALVSSSTA). Residues 40–62 (RSLRNTEERSIAAILAEAGEEDR) carry the RxLR-dEER motif. The WY-domain stretch occupies residues 72–107 (WYKAKLTPTQVKTVLGVSQAEMNNVAKQLQRLYLGY).

Belongs to the RxLR effector family. In terms of assembly, forms an unusual trans-homodimer. Interacts with host UBK.

It localises to the secreted. The protein localises to the host nucleus. It is found in the host nucleolus. Effector that suppresses flg22-induced post-translational MAP kinase activation in potato and tomato, but not in Arabidopsis. The perception of highly conserved pathogen- or microbe-associated molecular patterns (PAMPs/MAMPs), such as flg22, triggers converging signaling pathways recruiting MAP kinase cascades and inducing transcriptional re-programming, yielding a generic antimicrobial response. Does not suppress programmed cell death triggered by the P.infestans elicitin infestin-1 (INF1), or by co-expression of tomato Cf4 with Cladosporium fulvum Avr4. Suppresses early pattern-triggered immunity (PTI) via interaction with the U-box-kinase protein UBK, a positive regulator of specific PTI pathways in both potato and Nicotiana benthamiana. The chain is RxLR effector protein SFI3 from Phytophthora infestans (strain T30-4) (Potato late blight agent).